The following is a 162-amino-acid chain: Small ribosomal subunit protein uS9 (162 aa).

Belongs to the universal ribosomal protein uS9 family.

The polypeptide is Small ribosomal subunit protein uS9 (Methylobacterium sp. (strain 4-46)).